The following is a 194-amino-acid chain: Thiol:disulfide interchange protein CycY (194 aa).

The N-terminal stretch at 1-37 (MSEQSTSANPQRRTFLMVLPLIAFIGLALLFWFRLGS) is a signal peptide. The region spanning 46-190 (ALIGRPAPQT…LRSVLLPQME (145 aa)) is the Thioredoxin domain. Residues C92 and C95 are joined by a disulfide bond.

It belongs to the thioredoxin family. DsbE subfamily.

The protein resides in the periplasm. Required for disulfide bond formation in some periplasmic proteins. Also acts as a disulfide oxidoreductase in cytochromes c biogenesis. The cysteines of apocytochromes c must be in the reduced state for covalent linkage between the two moieties to occur. This Bradyrhizobium diazoefficiens (strain JCM 10833 / BCRC 13528 / IAM 13628 / NBRC 14792 / USDA 110) protein is Thiol:disulfide interchange protein CycY (cycY).